The following is a 209-amino-acid chain: Large ribosomal subunit protein uL3 (209 aa).

The tract at residues 127–151 (SGGPSSHGSKFHRHLGGTGQATTPA) is disordered.

Belongs to the universal ribosomal protein uL3 family. Part of the 50S ribosomal subunit. Forms a cluster with proteins L14 and L19.

Functionally, one of the primary rRNA binding proteins, it binds directly near the 3'-end of the 23S rRNA, where it nucleates assembly of the 50S subunit. The protein is Large ribosomal subunit protein uL3 of Borrelia duttonii (strain Ly).